The following is a 274-amino-acid chain: Orotidine 5'-phosphate decarboxylase (274 aa).

Residues D40, 62–64 (KTH), 93–102 (DRKFVDIGNT), Y227, and R245 contribute to the substrate site. K95 acts as the Proton donor in catalysis.

The protein belongs to the OMP decarboxylase family.

The enzyme catalyses orotidine 5'-phosphate + H(+) = UMP + CO2. It participates in pyrimidine metabolism; UMP biosynthesis via de novo pathway; UMP from orotate: step 2/2. The polypeptide is Orotidine 5'-phosphate decarboxylase (URA3) (Coccidioides immitis (strain RS) (Valley fever fungus)).